We begin with the raw amino-acid sequence, 227 residues long: Ribonuclease 3 (227 aa).

Positions 6 to 128 constitute an RNase III domain; that stretch reads ASDYQQRIGY…VIAAIYLDAD (123 aa). Mg(2+) is bound at residue glutamate 41. Residue aspartate 45 is part of the active site. The Mg(2+) site is built by aspartate 114 and glutamate 117. Glutamate 117 is an active-site residue. The region spanning 155–225 is the DRBM domain; the sequence is DPKTRLQEWL…ASHAINQLDS (71 aa). Over residues 203–212 the composition is skewed to basic and acidic residues; it reads GEGSSRRLAE. A disordered region spans residues 203–227; the sequence is GEGSSRRLAEQDAASHAINQLDSNK.

The protein belongs to the ribonuclease III family. In terms of assembly, homodimer. The cofactor is Mg(2+).

It localises to the cytoplasm. It carries out the reaction Endonucleolytic cleavage to 5'-phosphomonoester.. Functionally, digests double-stranded RNA. Involved in the processing of primary rRNA transcript to yield the immediate precursors to the large and small rRNAs (23S and 16S). Processes some mRNAs, and tRNAs when they are encoded in the rRNA operon. Processes pre-crRNA and tracrRNA of type II CRISPR loci if present in the organism. The polypeptide is Ribonuclease 3 (Xylella fastidiosa (strain M12)).